A 789-amino-acid chain; its full sequence is Glycerol-3-phosphate acyltransferase (789 aa).

Positions 275–280 (SHRSYI) match the HXXXXD motif motif.

It belongs to the GPAT/DAPAT family.

It localises to the cell membrane. The catalysed reaction is sn-glycerol 3-phosphate + an acyl-CoA = a 1-acyl-sn-glycero-3-phosphate + CoA. It functions in the pathway phospholipid metabolism; CDP-diacylglycerol biosynthesis; CDP-diacylglycerol from sn-glycerol 3-phosphate: step 1/3. This chain is Glycerol-3-phosphate acyltransferase, found in Mycobacterium bovis (strain BCG / Pasteur 1173P2).